The sequence spans 314 residues: 4-hydroxy-3-methylbut-2-enyl diphosphate reductase (314 aa).

Cysteine 12 lines the [4Fe-4S] cluster pocket. Residues histidine 41 and histidine 74 each coordinate (2E)-4-hydroxy-3-methylbut-2-enyl diphosphate. Positions 41 and 74 each coordinate dimethylallyl diphosphate. Positions 41 and 74 each coordinate isopentenyl diphosphate. Cysteine 96 is a binding site for [4Fe-4S] cluster. Histidine 124 lines the (2E)-4-hydroxy-3-methylbut-2-enyl diphosphate pocket. Histidine 124 serves as a coordination point for dimethylallyl diphosphate. Histidine 124 is an isopentenyl diphosphate binding site. Glutamate 126 acts as the Proton donor in catalysis. Threonine 167 contributes to the (2E)-4-hydroxy-3-methylbut-2-enyl diphosphate binding site. Cysteine 197 is a [4Fe-4S] cluster binding site. Residues serine 225, serine 226, asparagine 227, and serine 269 each contribute to the (2E)-4-hydroxy-3-methylbut-2-enyl diphosphate site. Serine 225, serine 226, asparagine 227, and serine 269 together coordinate dimethylallyl diphosphate. The isopentenyl diphosphate site is built by serine 225, serine 226, asparagine 227, and serine 269.

This sequence belongs to the IspH family. It depends on [4Fe-4S] cluster as a cofactor.

It carries out the reaction isopentenyl diphosphate + 2 oxidized [2Fe-2S]-[ferredoxin] + H2O = (2E)-4-hydroxy-3-methylbut-2-enyl diphosphate + 2 reduced [2Fe-2S]-[ferredoxin] + 2 H(+). The enzyme catalyses dimethylallyl diphosphate + 2 oxidized [2Fe-2S]-[ferredoxin] + H2O = (2E)-4-hydroxy-3-methylbut-2-enyl diphosphate + 2 reduced [2Fe-2S]-[ferredoxin] + 2 H(+). It participates in isoprenoid biosynthesis; dimethylallyl diphosphate biosynthesis; dimethylallyl diphosphate from (2E)-4-hydroxy-3-methylbutenyl diphosphate: step 1/1. It functions in the pathway isoprenoid biosynthesis; isopentenyl diphosphate biosynthesis via DXP pathway; isopentenyl diphosphate from 1-deoxy-D-xylulose 5-phosphate: step 6/6. Functionally, catalyzes the conversion of 1-hydroxy-2-methyl-2-(E)-butenyl 4-diphosphate (HMBPP) into a mixture of isopentenyl diphosphate (IPP) and dimethylallyl diphosphate (DMAPP). Acts in the terminal step of the DOXP/MEP pathway for isoprenoid precursor biosynthesis. This is 4-hydroxy-3-methylbut-2-enyl diphosphate reductase from Haemophilus ducreyi (strain 35000HP / ATCC 700724).